Here is a 73-residue protein sequence, read N- to C-terminus: Large ribosomal subunit protein uL24 (73 aa).

Residues 51–65 (DDNPKGGFIHKEKPM) show a composition bias toward basic and acidic residues. Residues 51–73 (DDNPKGGFIHKEKPMHISNVKKA) are disordered.

Belongs to the universal ribosomal protein uL24 family. Part of the 50S ribosomal subunit.

One of two assembly initiator proteins, it binds directly to the 5'-end of the 23S rRNA, where it nucleates assembly of the 50S subunit. In terms of biological role, one of the proteins that surrounds the polypeptide exit tunnel on the outside of the subunit. The sequence is that of Large ribosomal subunit protein uL24 from Helicobacter acinonychis (strain Sheeba).